A 492-amino-acid polypeptide reads, in one-letter code: Glutamyl-tRNA(Gln) amidotransferase subunit A (492 aa).

Residues lysine 79 and serine 154 each act as charge relay system in the active site. Catalysis depends on serine 178, which acts as the Acyl-ester intermediate.

The protein belongs to the amidase family. GatA subfamily. As to quaternary structure, heterotrimer of A, B and C subunits.

The catalysed reaction is L-glutamyl-tRNA(Gln) + L-glutamine + ATP + H2O = L-glutaminyl-tRNA(Gln) + L-glutamate + ADP + phosphate + H(+). In terms of biological role, allows the formation of correctly charged Gln-tRNA(Gln) through the transamidation of misacylated Glu-tRNA(Gln) in organisms which lack glutaminyl-tRNA synthetase. The reaction takes place in the presence of glutamine and ATP through an activated gamma-phospho-Glu-tRNA(Gln). In Acinetobacter baumannii (strain AB0057), this protein is Glutamyl-tRNA(Gln) amidotransferase subunit A.